The following is a 237-amino-acid chain: Protein GrpE (237 aa).

Disordered stretches follow at residues 1–52 (MSGD…RLQQ) and 200–237 (KVSM…EPGV). Over residues 27–40 (ASMNSDEGQPSAQS) the composition is skewed to polar residues. Positions 204–218 (GPGPQSGASPSSAQS) are enriched in low complexity.

It belongs to the GrpE family. Homodimer.

It localises to the cytoplasm. Functionally, participates actively in the response to hyperosmotic and heat shock by preventing the aggregation of stress-denatured proteins, in association with DnaK and GrpE. It is the nucleotide exchange factor for DnaK and may function as a thermosensor. Unfolded proteins bind initially to DnaJ; upon interaction with the DnaJ-bound protein, DnaK hydrolyzes its bound ATP, resulting in the formation of a stable complex. GrpE releases ADP from DnaK; ATP binding to DnaK triggers the release of the substrate protein, thus completing the reaction cycle. Several rounds of ATP-dependent interactions between DnaJ, DnaK and GrpE are required for fully efficient folding. This Prochlorococcus marinus (strain MIT 9303) protein is Protein GrpE.